The following is a 306-amino-acid chain: uncharacterized protein (306 aa).

This is an uncharacterized protein from Treponema pallidum (strain Nichols).